Reading from the N-terminus, the 125-residue chain is Nascent polypeptide-associated complex protein (125 aa).

An NAC-A/B domain is found at 9-76; the sequence is PRMMKQMQKM…SKNTSKTAEK (68 aa).

This sequence belongs to the NAC-alpha family. Homodimer. Interacts with the ribosome. Binds ribosomal RNA.

Its function is as follows. Contacts the emerging nascent chain on the ribosome. This Methanococcus vannielii (strain ATCC 35089 / DSM 1224 / JCM 13029 / OCM 148 / SB) protein is Nascent polypeptide-associated complex protein.